The chain runs to 299 residues: Muscleblind-like protein (299 aa).

2 consecutive C3H1-type zinc fingers follow at residues 38-66 (WLQVEVCREFLRGQCARSDQECKFAHPPP) and 72-100 (QGRVTACYDSIKGRCTRENPKCKYLHPPQ).

The protein belongs to the muscleblind family.

The protein resides in the nucleus. Functionally, binds to RNA with repeat sequences CUG and CCUG. The chain is Muscleblind-like protein from Caenorhabditis briggsae.